A 413-amino-acid chain; its full sequence is Gamma-lactamase FDB1 (413 aa).

Zn(2+) is bound by residues His-126, His-128, Asp-130, His-131, His-211, Asp-235, and His-323.

It belongs to the metallo-beta-lactamase superfamily.

It participates in xenobiotic degradation. Its function is as follows. Gamma-lactamase; part of the Fusarium detoxification of benzoxazolinone cluster involved in the degradation of benzoxazolinones produced by the host plant. Maize, wheat, and rye produce the 2 benzoxazinone phytoanticipins 2,4-dihy-droxy-7-methoxy-1,4-benzoxazin-3-one (DIMBOA) and 2,4-dihydroxy-1,4-benzoxazin-3-one (DIBOA) that, due to their inherent instability once released, spontaneously degrade to the more stable corresponding benzoxazolinones, 6-methoxy-2-benzoxazolinone (MBOA) and 2-benzoxazolinone (BOA), respectively. The first step in the detoxification of benzoxazolinones involves the hydrolysis of the cyclic ester bond of benzoxazolinones by the gamma-lactamase FDB1 to aminophenols. FDB1 is able to convert BOA into 2-aminophenol (2-AP), as well as MBOA into 5-methoxy-2-aminophenol (2-AMP). The N-malonyltransferase FDB2 then metabolizes aminophenols via N-malonylation to non-toxic malonamic acids. FDB2 converts 2-AP into N-(2-hydroxyphenyl) malonamic acid (HPMA) and 2-AMP into N-(2-hydroxy-4-methoxyphenyl) malonamic acid (HMPMA). The cluster also contains 2 transcription factors (FDB3 and FPSE_08121), an aldo-keto reductase (FPSE_08125) that possibly associates with a ketone component of BOA and MBOA degradation, an esterase (FPSE_08126), an acyl-CoA transferase (FPSE_08120), a solute carrier protein (FPSE_08119) and a transmembrane transporter (FPSE_08127) proposed to shuttle metabolites of benzoxazolinone degradation. In Fusarium pseudograminearum (strain CS3096) (Wheat and barley crown-rot fungus), this protein is Gamma-lactamase FDB1.